We begin with the raw amino-acid sequence, 32 residues long: Cytochrome b6-f complex subunit 7 (32 aa).

A helical transmembrane segment spans residues 9-27 (AVVFWVLIPVGLAGGALLL).

It belongs to the PetM family. In terms of assembly, the 4 large subunits of the cytochrome b6-f complex are cytochrome b6, subunit IV (17 kDa polypeptide, PetD), cytochrome f and the Rieske protein, while the 4 small subunits are PetG, PetL, PetM and PetN. The complex functions as a dimer.

The protein localises to the cellular thylakoid membrane. Component of the cytochrome b6-f complex, which mediates electron transfer between photosystem II (PSII) and photosystem I (PSI), cyclic electron flow around PSI, and state transitions. The polypeptide is Cytochrome b6-f complex subunit 7 (Synechococcus sp. (strain CC9311)).